The sequence spans 275 residues: Large ribosomal subunit protein uL2 (275 aa).

The tract at residues 218 to 275 (RPQTRGSAMNPIDHPHGGGEGKTNSGRHPVSPWGMPTKGYKTRKKKASDKLIISKRKK) is disordered. Over residues 257–275 (YKTRKKKASDKLIISKRKK) the composition is skewed to basic residues.

It belongs to the universal ribosomal protein uL2 family. In terms of assembly, part of the 50S ribosomal subunit. Forms a bridge to the 30S subunit in the 70S ribosome.

One of the primary rRNA binding proteins. Required for association of the 30S and 50S subunits to form the 70S ribosome, for tRNA binding and peptide bond formation. It has been suggested to have peptidyltransferase activity; this is somewhat controversial. Makes several contacts with the 16S rRNA in the 70S ribosome. The polypeptide is Large ribosomal subunit protein uL2 (Sulfurovum sp. (strain NBC37-1)).